The primary structure comprises 379 residues: ORC1-type DNA replication protein 2 (379 aa).

Residues Thr-69–Thr-73, Tyr-211, and Arg-223 each bind ATP.

This sequence belongs to the CDC6/cdc18 family. Interacts with MCM. In terms of processing, autophosphorylated on a serine. Phosphorylation is inhibited by binding to MCM. Both single-stranded DNA and double-stranded DNA inhibit the phosphorylation reaction.

Involved in regulation of DNA replication. Dissociates the MCM complex and inhibits the MCM helicase activity, suggesting that it may function as a helicase loader. Binds to both specific and random double-stranded or single-stranded DNA. This is ORC1-type DNA replication protein 2 (cdc6-2) from Methanothermobacter thermautotrophicus (strain ATCC 29096 / DSM 1053 / JCM 10044 / NBRC 100330 / Delta H) (Methanobacterium thermoautotrophicum).